The chain runs to 542 residues: CTP synthase (542 aa).

Residues 1 to 265 form an amidoligase domain region; it reads MTRYIFVTGG…DDFVVERFGL (265 aa). Residue S13 coordinates CTP. Position 13 (S13) interacts with UTP. ATP is bound by residues 14–19 and D71; that span reads SLGKGI. Mg(2+)-binding residues include D71 and E139. Residues 146–148, 186–191, and K222 contribute to the CTP site; these read DIE and KTKPTQ. Residues 186–191 and K222 contribute to the UTP site; that span reads KTKPTQ. One can recognise a Glutamine amidotransferase type-1 domain in the interval 290-541; sequence TIAMVGKYME…VKAALAQKNK (252 aa). Residue G351 participates in L-glutamine binding. C378 functions as the Nucleophile; for glutamine hydrolysis in the catalytic mechanism. L-glutamine-binding positions include 379-382, E402, and R469; that span reads LGMQ. Residues H514 and E516 contribute to the active site.

It belongs to the CTP synthase family. Homotetramer.

It carries out the reaction UTP + L-glutamine + ATP + H2O = CTP + L-glutamate + ADP + phosphate + 2 H(+). The catalysed reaction is L-glutamine + H2O = L-glutamate + NH4(+). The enzyme catalyses UTP + NH4(+) + ATP = CTP + ADP + phosphate + 2 H(+). It participates in pyrimidine metabolism; CTP biosynthesis via de novo pathway; CTP from UDP: step 2/2. Allosterically activated by GTP, when glutamine is the substrate; GTP has no effect on the reaction when ammonia is the substrate. The allosteric effector GTP functions by stabilizing the protein conformation that binds the tetrahedral intermediate(s) formed during glutamine hydrolysis. Inhibited by the product CTP, via allosteric rather than competitive inhibition. In terms of biological role, catalyzes the ATP-dependent amination of UTP to CTP with either L-glutamine or ammonia as the source of nitrogen. Regulates intracellular CTP levels through interactions with the four ribonucleotide triphosphates. The sequence is that of CTP synthase from Pseudomonas entomophila (strain L48).